A 303-amino-acid polypeptide reads, in one-letter code: Elongation factor Ts (303 aa).

Residues threonine 80–valine 83 are involved in Mg(2+) ion dislocation from EF-Tu.

It belongs to the EF-Ts family.

It is found in the cytoplasm. In terms of biological role, associates with the EF-Tu.GDP complex and induces the exchange of GDP to GTP. It remains bound to the aminoacyl-tRNA.EF-Tu.GTP complex up to the GTP hydrolysis stage on the ribosome. This is Elongation factor Ts from Clostridium botulinum (strain Alaska E43 / Type E3).